A 192-amino-acid polypeptide reads, in one-letter code: MYIVFEGIDGAGKSTQINLLKDWLDQNGFDVETVVEPTDSEVGKLIRKILQRPDATTDRIQKTLGLLFAADRMLIMDKLNDDSKVILSDRSFISSLAYQEPAEWIEQINKYAKEPDLVLLLDVDVKTSVNRCSKEDEFENEEFLSKVKANYLDLISNFNHEIIDASTGVNKVSTDIKKAVAPYMGICPDCIR.

Residue G7–S14 coordinates ATP.

It belongs to the thymidylate kinase family.

It carries out the reaction dTMP + ATP = dTDP + ADP. The protein is Probable thymidylate kinase of Methanobrevibacter smithii (strain ATCC 35061 / DSM 861 / OCM 144 / PS).